The primary structure comprises 357 residues: MAKGKRKNPTNRNQDHSPSSERSTPTPPSPGHPNTTENLDPDLKTFLMMMIEDIKKDFHKSLKDLQESTAKELQALKEKQENTAKQVMEMNKTILELKGEVDTIKKTQSEATLEIETLGKRSGTIDASISNRIQEMEERISGAEDSIENIDTTVKENTKCKRILTQNIQVIQDTMRRPNLRIIGIDENEDFQLKGPANIFNKIIEENFPNIKKEMPMIIQEAYRTPNRLDQKRNSSRHIIIRTTNALNKDRILKAVREKGQVTYKGRPIRITPDFSPETMKARRAWTDVIQTLREHKCQPRLLYPAKLSITIDGETKVFHDKTKFTQYLSTNPALQRIITEKKQYKDGNHALEQPRK.

The interval 1 to 40 (MAKGKRKNPTNRNQDHSPSSERSTPTPPSPGHPNTTENLD) is disordered. Residues 59 to 156 (HKSLKDLQES…IENIDTTVKE (98 aa)) adopt a coiled-coil conformation. Residues 179 to 274 (NLRIIGIDEN…KGRPIRITPD (96 aa)) are RNA recognition motif (RRM) domain. The C-terminal domain (CTD) stretch occupies residues 278-339 (ETMKARRAWT…STNPALQRII (62 aa)).

The protein belongs to the transposase 22 family. In terms of assembly, homotrimer (via coiled coil domain). May also form larger homooligomers. Interacts with Tex19.1 and UBR2. Interacts with MOV10. Post-translationally, polyubiquitinated, probably by UBR2, which induces its degradation. As to expression, expressed in meiotic spermatocytes and in the cerebellum (at protein level).

The protein resides in the nucleus. It localises to the nucleolus. It is found in the cytoplasm. Its subcellular location is the cytoplasmic ribonucleoprotein granule. The protein localises to the stress granule. Its function is as follows. Nucleic acid-binding protein which is essential for retrotransposition of LINE-1 elements in the genome. Functions as a nucleic acid chaperone binding its own transcript and therefore preferentially mobilizing the transcript from which they are encoded. The chain is LINE-1 retrotransposable element ORF1 protein from Mus musculus (Mouse).